The following is a 421-amino-acid chain: E3 ubiquitin-protein ligase MARCHF4 (421 aa).

A signal peptide spans 1–16 (MLLAIGVIVWCWGLLS). The tract at residues 60–79 (ELNAEGNATSSATESHSLAN) is disordered. Residues 65–77 (GNATSSATESHSL) are compositionally biased toward polar residues. An RING-CH-type zinc finger spans residues 135 to 195 (DSGVRTPLCR…ELCYYKYQVI (61 aa)). Zn(2+) is bound by residues Cys143, Cys146, Cys159, Cys161, His169, Cys172, Cys185, and Cys188. 2 helical membrane passes run 218-238 (IAAAVLGSLFLIASISWLVWS) and 252-272 (LFQICYAMYGFMDLVCIALIV). Disordered regions lie at residues 319-385 (PLTH…LPDH) and 401-421 (QEPRGQTSNSNRELVMRVTTV). Composition is skewed to polar residues over residues 367–380 (TEPQDSSEPSNGQP) and 403–412 (PRGQTSNSNR).

The protein localises to the golgi apparatus membrane. It catalyses the reaction S-ubiquitinyl-[E2 ubiquitin-conjugating enzyme]-L-cysteine + [acceptor protein]-L-lysine = [E2 ubiquitin-conjugating enzyme]-L-cysteine + N(6)-ubiquitinyl-[acceptor protein]-L-lysine.. It participates in protein modification; protein ubiquitination. Its function is as follows. E3 ubiquitin-protein ligase. E3 ubiquitin ligases accept ubiquitin from an E2 ubiquitin-conjugating enzyme in the form of a thioester and then directly transfer the ubiquitin to targeted substrates. This is E3 ubiquitin-protein ligase MARCHF4 (marchf4) from Danio rerio (Zebrafish).